A 285-amino-acid polypeptide reads, in one-letter code: Hypersensitive-induced response protein 3 (285 aa).

Residue Gly-2 is the site of N-myristoyl glycine attachment. Coiled-coil stretches lie at residues 113–139 (NLDDVFEQKNEIAKSVEEELDKAMTAY) and 165–185 (NAAARMRVAASEKAEAEKIIQ).

Self-interacts and forms heteromers. Interacts with NB-LRR class of R proteins before R proteins (e.g. RPS2 or RPM1) are activated by the effectors.

The protein resides in the cell membrane. The chain is Hypersensitive-induced response protein 3 (HIR3) from Arabidopsis thaliana (Mouse-ear cress).